A 393-amino-acid polypeptide reads, in one-letter code: Bifunctional enzyme Fae/Hps (393 aa).

Residues 1-161 (MYLIGEALIG…HEKDRAAHAV (161 aa)) are formaldehyde-activating enzyme. H17 (proton donor) is an active-site residue. D19, L48, K66, T68, and Q83 together coordinate substrate. Residues 162-393 (MGFKVPRLWD…IDQFRIMTDF (232 aa)) form a 3-hexulose-6-phosphate synthase region.

This sequence in the N-terminal section; belongs to the formaldehyde-activating enzyme family. In the C-terminal section; belongs to the HPS/KGPDC family. HPS subfamily.

The catalysed reaction is 5,6,7,8-tetrahydromethanopterin + formaldehyde = 5,10-methylenetetrahydromethanopterin + H2O. The enzyme catalyses D-ribulose 5-phosphate + formaldehyde = D-arabino-hex-3-ulose 6-phosphate. It participates in carbohydrate biosynthesis; D-ribose 5-phosphate biosynthesis. Catalyzes the condensation of formaldehyde with tetrahydromethanopterin (H(4)MPT) to 5,10-methylenetetrahydromethanopterin. In terms of biological role, catalyzes the reversible formation of ribulose-5-phosphate and formaldehyde from 3-hexulose-6-phosphate. This chain is Bifunctional enzyme Fae/Hps, found in Methanospirillum hungatei JF-1 (strain ATCC 27890 / DSM 864 / NBRC 100397 / JF-1).